The sequence spans 212 residues: Pyridoxine/pyridoxamine 5'-phosphate oxidase (212 aa).

Substrate contacts are provided by residues 8–11 (RREY) and lysine 66. FMN-binding positions include 61-66 (RIVLLK), 76-77 (FT), arginine 82, lysine 83, and glutamine 105. Substrate contacts are provided by tyrosine 123, arginine 127, and serine 131. Residues 140–141 (QS) and tryptophan 185 each bind FMN. 191 to 193 (RLH) provides a ligand contact to substrate. Position 195 (arginine 195) interacts with FMN.

It belongs to the pyridoxamine 5'-phosphate oxidase family. Homodimer. The cofactor is FMN.

The catalysed reaction is pyridoxamine 5'-phosphate + O2 + H2O = pyridoxal 5'-phosphate + H2O2 + NH4(+). It carries out the reaction pyridoxine 5'-phosphate + O2 = pyridoxal 5'-phosphate + H2O2. The protein operates within cofactor metabolism; pyridoxal 5'-phosphate salvage; pyridoxal 5'-phosphate from pyridoxamine 5'-phosphate: step 1/1. It functions in the pathway cofactor metabolism; pyridoxal 5'-phosphate salvage; pyridoxal 5'-phosphate from pyridoxine 5'-phosphate: step 1/1. Catalyzes the oxidation of either pyridoxine 5'-phosphate (PNP) or pyridoxamine 5'-phosphate (PMP) into pyridoxal 5'-phosphate (PLP). In Shewanella amazonensis (strain ATCC BAA-1098 / SB2B), this protein is Pyridoxine/pyridoxamine 5'-phosphate oxidase.